Consider the following 208-residue polypeptide: Probable GTP-binding protein EngB (208 aa).

The EngB-type G domain maps to 18–187; it reads KQFEICVIGR…FALMKKVVIE (170 aa). Residues 26–33, 52–56, 69–72, 135–138, and 166–168 each bind GTP; these read GRSNVGKS, GRTQL, DLPG, NKVD, and VSA. Residues Ser33 and Thr54 each coordinate Mg(2+).

It belongs to the TRAFAC class TrmE-Era-EngA-EngB-Septin-like GTPase superfamily. EngB GTPase family. Requires Mg(2+) as cofactor.

Its function is as follows. Necessary for normal cell division and for the maintenance of normal septation. In Ureaplasma urealyticum serovar 10 (strain ATCC 33699 / Western), this protein is Probable GTP-binding protein EngB.